The sequence spans 149 residues: Large ribosomal subunit protein bL9 (149 aa).

This sequence belongs to the bacterial ribosomal protein bL9 family.

In terms of biological role, binds to the 23S rRNA. The polypeptide is Large ribosomal subunit protein bL9 (Aliivibrio fischeri (strain ATCC 700601 / ES114) (Vibrio fischeri)).